The sequence spans 122 residues: Large ribosomal subunit protein bL17 (122 aa).

This sequence belongs to the bacterial ribosomal protein bL17 family. Part of the 50S ribosomal subunit. Contacts protein L32.

The sequence is that of Large ribosomal subunit protein bL17 from Neisseria meningitidis serogroup C / serotype 2a (strain ATCC 700532 / DSM 15464 / FAM18).